Here is a 679-residue protein sequence, read N- to C-terminus: Leucine-rich repeat, immunoglobulin-like domain and transmembrane domain-containing protein 3 (679 aa).

Positions 1–19 are cleaved as a signal peptide; that stretch reads MHLFACLCIVLSFLEGVGC. Topologically, residues 20 to 582 are lumenal; the sequence is LCPSQCTCDY…RVEGDDSQWS (563 aa). 5 LRR repeats span residues 56 to 79, 80 to 103, 104 to 128, 129 to 151, and 152 to 175; these read PVDT…AFYY, LVEL…SFYN, LKQL…LLDM, PLLR…ALRY, and LKNL…FLES. The 53-residue stretch at 201–253 folds into the LRRCT domain; that stretch reads NPWFCDCHISKMIELSKVVDPAIVLLDPLMTCSEPERLTGILFQRAELEHCLK. The 91-residue stretch at 254–344 folds into the Ig-like domain; it reads PSVMTSATKI…GMSEAVVTVT (91 aa). C275 and C328 are disulfide-bonded. The N-linked (GlcNAc...) asparagine glycan is linked to N296. Positions 351-375 are disordered; that stretch reads TPIPPDTSERTGDHPEWDVQPGSGR. Over residues 357-367 the composition is skewed to basic and acidic residues; the sequence is TSERTGDHPEW. Residues 486-574 enclose the Fibronectin type-III domain; sequence AIENLRVVSE…QCITFSTERV (89 aa). The chain crosses the membrane as a helical span at residues 583–603; it reads LLLVVTSTACVVILPLICFLL. Residues 604 to 679 are Cytoplasmic-facing; the sequence is YKVCKLQCKS…SEGSRPEYYC (76 aa).

Post-translationally, glycosylated. As to expression, detected in the outer plexiform layer (OPL) of the retina where it localizes to ON-bipolar cells (at protein level).

The protein resides in the cell projection. The protein localises to the dendrite. Its subcellular location is the perikaryon. It localises to the endoplasmic reticulum membrane. In terms of biological role, plays a role in the synapse formation and synaptic transmission between cone photoreceptor cells and retinal bipolar cells. Required for normal transmission of a light-evoked stimulus from the cone photoreceptor cells to the ON-bipolar cells and ON-ganglion cells in the inner retina. Required in retinal ON-bipolar cells for normal localization of the cation channel TRPM1 at dendrite tips. Seems to play a specific role in synaptic contacts made by ON-bipolar cells with cone photoreceptor pedicles. May also have a role in cone synapse formation. Might facilitate FGFR1 exit from the endoplasmic reticulum to the Golgi. Could be a regulator of the FGFRs. The polypeptide is Leucine-rich repeat, immunoglobulin-like domain and transmembrane domain-containing protein 3 (LRIT3) (Homo sapiens (Human)).